The chain runs to 747 residues: ATP-dependent DNA helicase Hel308 (747 aa).

ATP contacts are provided by residues glutamine 29 and 47 to 54; that span reads VPTASGKT. Residues 34 to 200 form the Helicase ATP-binding domain; sequence DAGVADGESL…WLDAELVDSS (167 aa). Residues 145–148 carry the DEAH box motif; the sequence is DEVH. The region spanning 234–434 is the Helicase C-terminal domain; that stretch reads PTEAVVRETL…REPSMRTHLL (201 aa). The interval 711–747 is disordered; it reads AAGHQQPEMDGVTPDADVKESAAAAGTDDGQANLGDF.

It belongs to the helicase family. Hel308 subfamily. In terms of assembly, monomer.

It carries out the reaction Couples ATP hydrolysis with the unwinding of duplex DNA by translocating in the 3'-5' direction.. It catalyses the reaction ATP + H2O = ADP + phosphate + H(+). DNA-dependent ATPase and 3'-5' DNA helicase that may be involved in repair of stalled replication forks. This Natronomonas pharaonis (strain ATCC 35678 / DSM 2160 / CIP 103997 / JCM 8858 / NBRC 14720 / NCIMB 2260 / Gabara) (Halobacterium pharaonis) protein is ATP-dependent DNA helicase Hel308.